The sequence spans 233 residues: Large ribosomal subunit protein uL1 (233 aa).

Belongs to the universal ribosomal protein uL1 family. In terms of assembly, part of the 50S ribosomal subunit.

Binds directly to 23S rRNA. The L1 stalk is quite mobile in the ribosome, and is involved in E site tRNA release. Its function is as follows. Protein L1 is also a translational repressor protein, it controls the translation of the L11 operon by binding to its mRNA. The sequence is that of Large ribosomal subunit protein uL1 from Thermotoga petrophila (strain ATCC BAA-488 / DSM 13995 / JCM 10881 / RKU-1).